A 287-amino-acid polypeptide reads, in one-letter code: Ribosomal RNA small subunit methyltransferase A (287 aa).

Asn28, Leu30, Gly55, Glu77, Asp103, and Asn123 together coordinate S-adenosyl-L-methionine.

Belongs to the class I-like SAM-binding methyltransferase superfamily. rRNA adenine N(6)-methyltransferase family. RsmA subfamily.

The protein localises to the cytoplasm. The enzyme catalyses adenosine(1518)/adenosine(1519) in 16S rRNA + 4 S-adenosyl-L-methionine = N(6)-dimethyladenosine(1518)/N(6)-dimethyladenosine(1519) in 16S rRNA + 4 S-adenosyl-L-homocysteine + 4 H(+). Specifically dimethylates two adjacent adenosines (A1518 and A1519) in the loop of a conserved hairpin near the 3'-end of 16S rRNA in the 30S particle. May play a critical role in biogenesis of 30S subunits. In Rhodopseudomonas palustris (strain TIE-1), this protein is Ribosomal RNA small subunit methyltransferase A.